A 364-amino-acid chain; its full sequence is N-acetyl-gamma-glutamyl-phosphate reductase (364 aa).

Cys157 is an active-site residue.

The protein belongs to the NAGSA dehydrogenase family. Type 1 subfamily.

The protein localises to the cytoplasm. The enzyme catalyses N-acetyl-L-glutamate 5-semialdehyde + phosphate + NADP(+) = N-acetyl-L-glutamyl 5-phosphate + NADPH + H(+). The protein operates within amino-acid biosynthesis; L-arginine biosynthesis; N(2)-acetyl-L-ornithine from L-glutamate: step 3/4. In terms of biological role, catalyzes the NADPH-dependent reduction of N-acetyl-5-glutamyl phosphate to yield N-acetyl-L-glutamate 5-semialdehyde. This Bifidobacterium longum (strain DJO10A) protein is N-acetyl-gamma-glutamyl-phosphate reductase.